The following is a 398-amino-acid chain: 1,4-beta-D-glucan cellobiohydrolase CEL6C (398 aa).

The signal sequence occupies residues M1 to A18. An N-linked (GlcNAc...) asparagine glycan is attached at N70. D125 is an active-site residue. Residue D170 is the Proton donor of the active site. The substrate site is built by W218, W318, K346, and E350.

It belongs to the glycosyl hydrolase 6 (cellulase B) family. In terms of processing, both N- and O-glycosylated.

It is found in the secreted. The enzyme catalyses Hydrolysis of (1-&gt;4)-beta-D-glucosidic linkages in cellulose and cellotetraose, releasing cellobiose from the non-reducing ends of the chains.. Exoglucanase that plays an important function in biomass degradation by catalyzing the hydrolysis of the non-reducing end beta-1,4-glucosidic linkages in cellulose and cellotetraose to release cellobiose. Hydrolyzes crystalline and amorphous cellulose but is inactive on hydroxyethyl cellulose, mannan, galactomannan, xyloglucan, arabinoxylan, arabinan, xylan, and pectin. This chain is 1,4-beta-D-glucan cellobiohydrolase CEL6C, found in Podospora anserina (strain S / ATCC MYA-4624 / DSM 980 / FGSC 10383) (Pleurage anserina).